The chain runs to 143 residues: Large ribosomal subunit protein uL11 (143 aa).

It belongs to the universal ribosomal protein uL11 family. As to quaternary structure, part of the ribosomal stalk of the 50S ribosomal subunit. Interacts with L10 and the large rRNA to form the base of the stalk. L10 forms an elongated spine to which L12 dimers bind in a sequential fashion forming a multimeric L10(L12)X complex. Post-translationally, one or more lysine residues are methylated.

Its function is as follows. Forms part of the ribosomal stalk which helps the ribosome interact with GTP-bound translation factors. This Beutenbergia cavernae (strain ATCC BAA-8 / DSM 12333 / CCUG 43141 / JCM 11478 / NBRC 16432 / NCIMB 13614 / HKI 0122) protein is Large ribosomal subunit protein uL11.